The following is a 305-amino-acid chain: Putative HTH-type transcriptional regulatory protein Saci_1344 (305 aa).

The HTH cro/C1-type domain maps to 128-183 (LREKREEKNMSLGELSQRLGVSRISVYDYEKEDSYVSIEVAEKLIEIFGDEVIGDI). Positions 139-158 (LGELSQRLGVSRISVYDYEK) form a DNA-binding region, H-T-H motif.

The sequence is that of Putative HTH-type transcriptional regulatory protein Saci_1344 from Sulfolobus acidocaldarius (strain ATCC 33909 / DSM 639 / JCM 8929 / NBRC 15157 / NCIMB 11770).